The primary structure comprises 518 residues: Glutamate--cysteine ligase (518 aa).

Belongs to the glutamate--cysteine ligase type 1 family. Type 1 subfamily.

It catalyses the reaction L-cysteine + L-glutamate + ATP = gamma-L-glutamyl-L-cysteine + ADP + phosphate + H(+). Its pathway is sulfur metabolism; glutathione biosynthesis; glutathione from L-cysteine and L-glutamate: step 1/2. This is Glutamate--cysteine ligase from Klebsiella pneumoniae (strain 342).